The following is a 102-amino-acid chain: Circadian clock protein KaiB3 (102 aa).

Belongs to the KaiB family. Purifies as a monomer and homotetramer. Interacts with KaiC1 and KaiC3.

Its function is as follows. A paralog of KaiB1, the major clock oscillator protein in this species. KaiB3 and KaiC3 may cross talk with the core oscillator. The monomer reduces the ATPase activity of KaiC3 by 55%, the homotetramer has no effect. In terms of biological role, a metamorphic protein which may reversibly switch between an inactive tetrameric fold and a rare thioredoxin-like monomeric fold (KaiB(fs)). In Synechocystis sp. (strain ATCC 27184 / PCC 6803 / Kazusa), this protein is Circadian clock protein KaiB3.